We begin with the raw amino-acid sequence, 367 residues long: ELAV-like protein 3 (367 aa).

3 consecutive RRM domains span residues 39–117, 125–205, and 284–362; these read TNLI…YARP, ANLY…FANN, and WCIF…FKTS.

The protein belongs to the RRM elav family. As to quaternary structure, interacts with MAP1B light chain LC1. Brain specific. Expressed in the hippocampus with expression in CA1, CA3 and dentate gyrus.

Its function is as follows. RNA-binding protein that binds to AU-rich element (ARE) sequences of target mRNAs, including VEGF mRNA. May also bind poly-A tracts via RRM 3. May be involved in neuronal differentiation and maintenance. Plays a role in the stabilization of GAP43 mRNA and in spatial learning. In Mus musculus (Mouse), this protein is ELAV-like protein 3 (Elavl3).